Reading from the N-terminus, the 367-residue chain is Protein trichome birefringence-like 39 (367 aa).

The chain crosses the membrane as a helical; Signal-anchor for type II membrane protein span at residues 7–29 (GNPSFLFFFFFFLCLSTVSAYIN). Positions 120-122 (GDS) match the GDS motif motif. A DCXHWCLPGXXDXWN motif motif is present at residues 343–357 (DCSHWCLPGLPDTWN).

Belongs to the PC-esterase family. TBL subfamily.

Its subcellular location is the membrane. Its function is as follows. May act as a bridging protein that binds pectin and other cell wall polysaccharides. Probably involved in maintaining esterification of pectins. May be involved in the specific O-acetylation of cell wall polymers. The polypeptide is Protein trichome birefringence-like 39 (TBL39) (Arabidopsis thaliana (Mouse-ear cress)).